A 472-amino-acid chain; its full sequence is Interferon-induced protein with tetratricopeptide repeats 2 (472 aa).

Ser-2 carries the post-translational modification N-acetylserine. TPR repeat units lie at residues Ala-51–Ala-89, Glu-90–Ser-135, Pro-136–Asn-171, Pro-172–Asn-208, Thr-247–Asn-280, Ala-281–Arg-335, Val-336–Thr-366, Pro-367–Ser-405, and Arg-406–Gln-448. Positions Met-446–Glu-472 are disordered. Residues Leu-462–Glu-472 are compositionally biased toward polar residues.

It belongs to the IFIT family. As to quaternary structure, domain-swapped homodimer. Component of an interferon-dependent multiprotein complex, at least composed of IFIT1, IFIT2 and IFIT3. Interacts with IFIT1 and IFIT3. Interacts with STING1/MITA and disrupts its interaction with MAVS or TBK1. Interacts with EIF3E and EIF3C.

It is found in the cytoplasm. Its subcellular location is the endoplasmic reticulum. IFN-induced antiviral protein which inhibits expression of viral messenger RNAs lacking 2'-O-methylation of the 5' cap. The ribose 2'-O-methylation would provide a molecular signature to distinguish between self and non-self mRNAs by the host during viral infection. Viruses evolved several ways to evade this restriction system such as encoding their own 2'-O-methylase for their mRNAs or by stealing host cap containing the 2'-O-methylation (cap snatching mechanism). Binds AU-rich viral RNAs, with or without 5' triphosphorylation, RNA-binding is required for antiviral activity. Can promote apoptosis. The chain is Interferon-induced protein with tetratricopeptide repeats 2 (IFIT2) from Homo sapiens (Human).